Here is a 141-residue protein sequence, read N- to C-terminus: HTH-type transcriptional repressor NsrR (141 aa).

One can recognise an HTH rrf2-type domain in the interval Q2–E129. A DNA-binding region (H-T-H motif) is located at residues I28–R51. [2Fe-2S] cluster-binding residues include C91, C96, and C102.

The cofactor is [2Fe-2S] cluster.

In terms of biological role, nitric oxide-sensitive repressor of genes involved in protecting the cell against nitrosative stress. May require iron for activity. The polypeptide is HTH-type transcriptional repressor NsrR (Escherichia coli O139:H28 (strain E24377A / ETEC)).